The following is a 235-amino-acid chain: tRNA (adenine(37)-N6)-methyltransferase (235 aa).

The TsaA-like domain maps to 6 to 147; the sequence is FEQIGVIRSP…YLPFAESLPD (142 aa). Residues 23 to 25, 64 to 65, Arg92, and 127 to 130 each bind S-adenosyl-L-methionine; these read PRQ, HQ, and VDGT.

The protein belongs to the tRNA methyltransferase O family. In terms of assembly, homodimer.

It carries out the reaction N(6)-L-threonylcarbamoyladenosine(37) in tRNA + S-adenosyl-L-methionine = N(6)-methyl,N(6)-L-threonylcarbamoyladenosine(37) in tRNA + S-adenosyl-L-homocysteine + H(+). In terms of biological role, S-adenosyl-L-methionine-dependent methyltransferase responsible for the addition of the methyl group in the formation of N6-methyl-N6-threonylcarbamoyladenosine at position 37 (m(6)t(6)A37) of the tRNA anticodon loop of tRNA(Thr)(GGU) that read codons starting with adenosine. The methyl group of m(6)t(6)A37 appears to slightly improve the efficiency of the tRNA decoding ability. The polypeptide is tRNA (adenine(37)-N6)-methyltransferase (Escherichia coli (strain K12)).